A 611-amino-acid polypeptide reads, in one-letter code: Chaperone protein HtpG (611 aa).

The tract at residues 1–326 is a; substrate-binding; it reads MSETLERHAF…TEDLPLNVSR (326 aa). Residues 327–536 form a b region; that stretch reads EMLQATPVLA…SGGPDLQMQR (210 aa). Positions 537-611 are c; it reads LLRRAGRGFG…RVATALAAQG (75 aa).

Belongs to the heat shock protein 90 family. Homodimer.

The protein localises to the cytoplasm. Its function is as follows. Molecular chaperone. Has ATPase activity. The chain is Chaperone protein HtpG from Methylobacterium nodulans (strain LMG 21967 / CNCM I-2342 / ORS 2060).